The sequence spans 892 residues: Alanine--tRNA ligase (892 aa).

Zn(2+) is bound by residues histidine 594, histidine 598, cysteine 702, and histidine 706.

It belongs to the class-II aminoacyl-tRNA synthetase family. Zn(2+) is required as a cofactor.

It is found in the cytoplasm. It catalyses the reaction tRNA(Ala) + L-alanine + ATP = L-alanyl-tRNA(Ala) + AMP + diphosphate. Its function is as follows. Catalyzes the attachment of alanine to tRNA(Ala) in a two-step reaction: alanine is first activated by ATP to form Ala-AMP and then transferred to the acceptor end of tRNA(Ala). Also edits incorrectly charged Ser-tRNA(Ala) and Gly-tRNA(Ala) via its editing domain. This chain is Alanine--tRNA ligase, found in Pyrobaculum arsenaticum (strain DSM 13514 / JCM 11321 / PZ6).